Consider the following 469-residue polypeptide: Tubulin gamma chain (469 aa).

GTP is bound at residue 142-148; the sequence is AGGTGSG.

It belongs to the tubulin family.

Its subcellular location is the cytoplasm. It localises to the cytoskeleton. The protein localises to the microtubule organizing center. It is found in the spindle pole body. In terms of biological role, tubulin is the major constituent of microtubules. The gamma chain is found at microtubule organizing centers (MTOC) such as the spindle poles or the centrosome, suggesting that it is involved in the minus-end nucleation of microtubule assembly. This Microbotryum violaceum (Anther smut fungus) protein is Tubulin gamma chain (TUB4).